A 451-amino-acid chain; its full sequence is UPF0210 protein Asuc_1169 (451 aa).

This sequence belongs to the UPF0210 family. As to quaternary structure, homodimer.

This is UPF0210 protein Asuc_1169 from Actinobacillus succinogenes (strain ATCC 55618 / DSM 22257 / CCUG 43843 / 130Z).